We begin with the raw amino-acid sequence, 83 residues long: Sulfur carrier protein TusA (83 aa).

Residue Cys19 is the Cysteine persulfide intermediate of the active site.

Belongs to the sulfur carrier protein TusA family.

Its subcellular location is the cytoplasm. Functionally, sulfur carrier protein which probably makes part of a sulfur-relay system. This Aliivibrio fischeri (strain ATCC 700601 / ES114) (Vibrio fischeri) protein is Sulfur carrier protein TusA.